The chain runs to 98 residues: Cell division topological specificity factor (98 aa).

This sequence belongs to the MinE family.

Its function is as follows. Prevents the cell division inhibition by proteins MinC and MinD at internal division sites while permitting inhibition at polar sites. This ensures cell division at the proper site by restricting the formation of a division septum at the midpoint of the long axis of the cell. The protein is Cell division topological specificity factor of Nitrosomonas europaea (strain ATCC 19718 / CIP 103999 / KCTC 2705 / NBRC 14298).